The sequence spans 154 residues: Large ribosomal subunit protein uL13 (154 aa).

This sequence belongs to the universal ribosomal protein uL13 family. Part of the 50S ribosomal subunit.

Its function is as follows. This protein is one of the early assembly proteins of the 50S ribosomal subunit, although it is not seen to bind rRNA by itself. It is important during the early stages of 50S assembly. This is Large ribosomal subunit protein uL13 from Allorhizobium ampelinum (strain ATCC BAA-846 / DSM 112012 / S4) (Agrobacterium vitis (strain S4)).